The primary structure comprises 393 residues: Phosphoglycerate kinase (393 aa).

Substrate is bound by residues 22-24 (DFN), Arg-37, 60-63 (HLGR), Arg-119, and Arg-152. ATP is bound by residues Lys-202, Gly-293, Glu-324, and 350–353 (GGDS).

It belongs to the phosphoglycerate kinase family. Monomer.

The protein localises to the cytoplasm. It carries out the reaction (2R)-3-phosphoglycerate + ATP = (2R)-3-phospho-glyceroyl phosphate + ADP. It functions in the pathway carbohydrate degradation; glycolysis; pyruvate from D-glyceraldehyde 3-phosphate: step 2/5. The chain is Phosphoglycerate kinase from Borrelia garinii subsp. bavariensis (strain ATCC BAA-2496 / DSM 23469 / PBi) (Borreliella bavariensis).